Here is a 426-residue protein sequence, read N- to C-terminus: Pyrophosphate--fructose 6-phosphate 1-phosphotransferase 2 (426 aa).

Gly15 serves as a coordination point for diphosphate. Asp114 is a binding site for Mg(2+). Substrate is bound by residues 140 to 142, 186 to 188, Glu247, and 308 to 311; these read TID, MGR, and YELR. Catalysis depends on Asp142, which acts as the Proton acceptor.

It belongs to the phosphofructokinase type A (PFKA) family. PPi-dependent PFK group II subfamily. Clade 'Short' sub-subfamily. In terms of assembly, homotetramer. Requires Mg(2+) as cofactor.

It localises to the cytoplasm. It catalyses the reaction beta-D-fructose 6-phosphate + diphosphate = beta-D-fructose 1,6-bisphosphate + phosphate + H(+). Its pathway is carbohydrate degradation; glycolysis; D-glyceraldehyde 3-phosphate and glycerone phosphate from D-glucose: step 3/4. Its activity is regulated as follows. Non-allosteric. In terms of biological role, catalyzes the phosphorylation of D-fructose 6-phosphate, the first committing step of glycolysis. Uses inorganic phosphate (PPi) as phosphoryl donor instead of ATP like common ATP-dependent phosphofructokinases (ATP-PFKs), which renders the reaction reversible, and can thus function both in glycolysis and gluconeogenesis. Consistently, PPi-PFK can replace the enzymes of both the forward (ATP-PFK) and reverse (fructose-bisphosphatase (FBPase)) reactions. This is Pyrophosphate--fructose 6-phosphate 1-phosphotransferase 2 (pfk2) from Trichomonas vaginalis (strain ATCC PRA-98 / G3).